Reading from the N-terminus, the 255-residue chain is Homeobox-leucine zipper protein ATHB-23 (255 aa).

Residues 68-127 (MGEKKRRLNMEQLKALEKDFELGNKLESDRKLELARALGLQPRQIAIWFQNRRARSKTKQ) constitute a DNA-binding region (homeobox). The leucine-zipper stretch occupies residues 128–163 (LEKDYDMLKRQFESLRDENEVLQTQNQKLQAQVMAL).

The protein belongs to the HD-ZIP homeobox family. Class I subfamily. As to expression, expressed in young leaves, in the adaxial domain of leaf primordia and the rib meristem. Expressed in the styles of flowers and siliques.

The protein resides in the nucleus. Probable transcription factor. The polypeptide is Homeobox-leucine zipper protein ATHB-23 (ATHB-23) (Arabidopsis thaliana (Mouse-ear cress)).